The following is a 206-amino-acid chain: Ribosomal RNA large subunit methyltransferase E (206 aa).

S-adenosyl-L-methionine is bound by residues glycine 60, tryptophan 62, aspartate 80, aspartate 96, and aspartate 121. The Proton acceptor role is filled by lysine 161.

This sequence belongs to the class I-like SAM-binding methyltransferase superfamily. RNA methyltransferase RlmE family.

It localises to the cytoplasm. The catalysed reaction is uridine(2552) in 23S rRNA + S-adenosyl-L-methionine = 2'-O-methyluridine(2552) in 23S rRNA + S-adenosyl-L-homocysteine + H(+). Its function is as follows. Specifically methylates the uridine in position 2552 of 23S rRNA at the 2'-O position of the ribose in the fully assembled 50S ribosomal subunit. The sequence is that of Ribosomal RNA large subunit methyltransferase E from Francisella tularensis subsp. tularensis (strain FSC 198).